The chain runs to 161 residues: MKLSEIADNVGSRKKRMRIGRGIGSGKGKTGGRGGKGQTARSGVRIKGFEGGQMPLHRRLPKRGFNNIFALEFAEVNLDRLQEAVDSKAIDAGKVVDAAALVEAGVLRRAKDGVRLLGRGELTAKLNIEVHGATKSAIAAVEKAGGSVKILAPKAEEGEAA.

A disordered region spans residues 1–43 (MKLSEIADNVGSRKKRMRIGRGIGSGKGKTGGRGGKGQTARSG). Over residues 21–37 (RGIGSGKGKTGGRGGKG) the composition is skewed to gly residues.

Part of the 50S ribosomal subunit.

Binds to the 23S rRNA. This Rhodopseudomonas palustris (strain ATCC BAA-98 / CGA009) protein is Large ribosomal subunit protein uL15.